The primary structure comprises 378 residues: Chaperone protein DnaJ (378 aa).

The 66-residue stretch at 5–70 folds into the J domain; it reads DYYQILGIPK…EKRTAYDQYG (66 aa). The segment at 133–211 adopts a CR-type zinc-finger fold; that stretch reads GTTKEIRIPT…CRGQGRIKTN (79 aa). C146, C149, C163, C166, C185, C188, C199, and C202 together coordinate Zn(2+). CXXCXGXG motif repeat units lie at residues 146 to 153, 163 to 170, 185 to 192, and 199 to 206; these read CKTCYGMG, CSTCHGKG, CPTCNGIG, and CRMCRGQG.

It belongs to the DnaJ family. Homodimer. Requires Zn(2+) as cofactor.

The protein localises to the cytoplasm. Participates actively in the response to hyperosmotic and heat shock by preventing the aggregation of stress-denatured proteins and by disaggregating proteins, also in an autonomous, DnaK-independent fashion. Unfolded proteins bind initially to DnaJ; upon interaction with the DnaJ-bound protein, DnaK hydrolyzes its bound ATP, resulting in the formation of a stable complex. GrpE releases ADP from DnaK; ATP binding to DnaK triggers the release of the substrate protein, thus completing the reaction cycle. Several rounds of ATP-dependent interactions between DnaJ, DnaK and GrpE are required for fully efficient folding. Also involved, together with DnaK and GrpE, in the DNA replication of plasmids through activation of initiation proteins. This chain is Chaperone protein DnaJ, found in Buchnera aphidicola subsp. Schizaphis graminum (strain Sg).